A 118-amino-acid chain; its full sequence is Large ribosomal subunit protein uL22 (118 aa).

This sequence belongs to the universal ribosomal protein uL22 family. In terms of assembly, part of the 50S ribosomal subunit.

This protein binds specifically to 23S rRNA; its binding is stimulated by other ribosomal proteins, e.g. L4, L17, and L20. It is important during the early stages of 50S assembly. It makes multiple contacts with different domains of the 23S rRNA in the assembled 50S subunit and ribosome. In terms of biological role, the globular domain of the protein is located near the polypeptide exit tunnel on the outside of the subunit, while an extended beta-hairpin is found that lines the wall of the exit tunnel in the center of the 70S ribosome. In Listeria innocua serovar 6a (strain ATCC BAA-680 / CLIP 11262), this protein is Large ribosomal subunit protein uL22.